Consider the following 80-residue polypeptide: Waprin-Phi3 (80 aa).

The first 22 residues, 1–22 (MKPWILLLLAGLLILSTQLTTA), serve as a signal peptide directing secretion. The 48-residue stretch at 31-78 (PKVKPGECPKVKIPPDYPCNQYCVWDFDCEGNKKCCPVGCAKECFPPG) folds into the WAP domain. Disulfide bonds link Cys-38-Cys-66, Cys-49-Cys-70, Cys-53-Cys-65, and Cys-59-Cys-74.

Belongs to the venom waprin family. Expressed by the venom gland.

It is found in the secreted. Its function is as follows. Damages membranes of susceptible bacteria. Has no hemolytic activity. Not toxic to mice. Does not inhibit the proteinases elastase and cathepsin G. The sequence is that of Waprin-Phi3 from Philodryas olfersii (Green snake).